The sequence spans 117 residues: Large ribosomal subunit protein bL19 (117 aa).

This sequence belongs to the bacterial ribosomal protein bL19 family.

This protein is located at the 30S-50S ribosomal subunit interface and may play a role in the structure and function of the aminoacyl-tRNA binding site. This Azobacteroides pseudotrichonymphae genomovar. CFP2 protein is Large ribosomal subunit protein bL19.